The primary structure comprises 430 residues: MAELTNHFNKVNELLNDWDGVGLSHELSMTELITSILNSINHNSHSGMSNQKKQQIQAKVNQIKKTDLVVKRQQDIDTLCANKIQHNYNEIVAYRLRSISSLLDSKYYDAFRYLIEAINSFVKVFELWSQNILWRLSLDLRLMAELATLNVGSNDSNNSNNNVTIDYFEEASRTLLSKCFQAANADRTPNLAESKKNAALGVVNQLFQIYFKINNLKLCKNLIKTMESPGFPTLESYPLNQVITYRFFNGRLSVFNGQYKKAQEELLYAFNKCPNDSIKNKRLILLFLVPMQLEQCKFPKKSLLEKFKLTQFIDIVQSIKSGNIKQFNECLSTHQNFFISKGIYLILEKLKIIVYRNLFKKVHLITTGQRIPIGNFVSALKWMENDAIDIDETECILSNLIYNGYLKGYISHKVALVVSPTNPFPKLPLN.

In terms of domain architecture, PCI spans 243–424; that stretch reads ITYRFFNGRL…ALVVSPTNPF (182 aa).

This sequence belongs to the CSN12 family.

This chain is PCI domain-containing protein 2 homolog (pcid2), found in Dictyostelium discoideum (Social amoeba).